A 114-amino-acid chain; its full sequence is UPF0145 protein TT_C1581 (114 aa).

Belongs to the UPF0145 family.

This Thermus thermophilus (strain ATCC BAA-163 / DSM 7039 / HB27) protein is UPF0145 protein TT_C1581.